A 314-amino-acid chain; its full sequence is Short-chain dehydrogenase/reductase sthC (314 aa).

Residues 1–10 (MAPAETTGNV) are compositionally biased toward polar residues. Positions 1-27 (MAPAETTGNVQRPEAGKQSMGSFWTQM) are disordered. NADP(+) is bound by residues Val56, Lys80, Asp105, Asn132, and Arg167. The active-site Proton donor is the Ser191. NADP(+) is bound by residues Tyr222 and Lys226. Tyr222 (proton acceptor) is an active-site residue. The Lowers pKa of active site Tyr role is filled by Lys226.

It belongs to the short-chain dehydrogenases/reductases (SDR) family.

The enzyme catalyses dehydroprobetaenone I + AH2 = probetaenone I + A. The catalysed reaction is betaenone C + AH2 = betaenone B + A. The protein operates within mycotoxin biosynthesis. In terms of biological role, short-chain dehydrogenase/reductase; part of the gene cluster that mediates the biosynthesis of the phytotoxin stemphyloxin II. The first step of the pathway is the synthesis of dehydroprobetaenone I by the polyketide synthase sthA and the enoyl reductase sthE via condensation of one acetyl-CoA starter unit with 7 malonyl-CoA units and 5 methylations. The C-terminal reductase (R) domain of sthA catalyzes the reductive release of the polyketide chain. Because sthA lacks a designated enoylreductase (ER) domain, the required activity is provided the enoyl reductase sthE. The short-chain dehydrogenase/reductase sthC then catalyzes reduction of dehydroprobetaenone I to probetaenone I. The cytochrome P450 monooxygenase sthF catalyzes successive epoxidation, oxidation (resulting from epoxide opening) and hydroxylation to install a tertiary alcohol in the decaline ring to yield betaenone C from dehydroprobetaenone I and betaenone B from probetaenone I. The FAD-linked oxidoreductase sthB is responsible for the conversion of betaenone C to betaenone A via an intramolecular aldol reaction between C-1 and C-17 to form the bridged tricyclic system in betaenone A. Finally, the cytochrome P450 monooxygenase sthD catalyzes the hydroxylation of C-15 to afford the final metabolite stemphyloxin II. The sequence is that of Short-chain dehydrogenase/reductase sthC from Phaeosphaeria nodorum (strain SN15 / ATCC MYA-4574 / FGSC 10173) (Glume blotch fungus).